The sequence spans 764 residues: 5-methyltetrahydropteroyltriglutamate--homocysteine methyltransferase (764 aa).

5-methyltetrahydropteroyltri-L-glutamate contacts are provided by residues 16 to 19 (RELK) and K121. Residues 440-442 (IGS) and E493 contribute to the L-homocysteine site. L-methionine contacts are provided by residues 440–442 (IGS) and E493. Residues 524 to 525 (RC) and W570 contribute to the 5-methyltetrahydropteroyltri-L-glutamate site. D608 provides a ligand contact to L-homocysteine. Position 608 (D608) interacts with L-methionine. Residue E614 coordinates 5-methyltetrahydropteroyltri-L-glutamate. Zn(2+) contacts are provided by H650, C652, and E674. Residue H703 is the Proton donor of the active site. C735 is a binding site for Zn(2+).

This sequence belongs to the vitamin-B12 independent methionine synthase family. Requires Zn(2+) as cofactor.

The catalysed reaction is 5-methyltetrahydropteroyltri-L-glutamate + L-homocysteine = tetrahydropteroyltri-L-glutamate + L-methionine. Its pathway is amino-acid biosynthesis; L-methionine biosynthesis via de novo pathway; L-methionine from L-homocysteine (MetE route): step 1/1. Functionally, catalyzes the transfer of a methyl group from 5-methyltetrahydrofolate to homocysteine resulting in methionine formation. The protein is 5-methyltetrahydropteroyltriglutamate--homocysteine methyltransferase of Burkholderia lata (strain ATCC 17760 / DSM 23089 / LMG 22485 / NCIMB 9086 / R18194 / 383).